A 300-amino-acid polypeptide reads, in one-letter code: UDP-N-acetylenolpyruvoylglucosamine reductase (300 aa).

Positions 27–216 constitute an FAD-binding PCMH-type domain; the sequence is RVGGPADVIF…TERREKTQPI (190 aa). R172 is an active-site residue. The Proton donor role is filled by S223. Residue E293 is part of the active site.

The protein belongs to the MurB family. The cofactor is FAD.

It localises to the cytoplasm. It catalyses the reaction UDP-N-acetyl-alpha-D-muramate + NADP(+) = UDP-N-acetyl-3-O-(1-carboxyvinyl)-alpha-D-glucosamine + NADPH + H(+). It functions in the pathway cell wall biogenesis; peptidoglycan biosynthesis. In terms of biological role, cell wall formation. The chain is UDP-N-acetylenolpyruvoylglucosamine reductase from Phenylobacterium zucineum (strain HLK1).